We begin with the raw amino-acid sequence, 126 residues long: SOSS complex subunit C homolog (126 aa).

The interval 106 to 126 (LEPLPSPATTPTAPPSHSISK) is disordered. Residues 107–119 (EPLPSPATTPTAP) show a composition bias toward pro residues.

Belongs to the SOSS-C family.

This is SOSS complex subunit C homolog from Drosophila sechellia (Fruit fly).